We begin with the raw amino-acid sequence, 943 residues long: MENIDIRGARTHNLKNINLTIPRNKLVVITGLSGSGKSSLAFDTLYAEGQRRYVESLSAYARQFLSLMEKPDVDSIEGLSPAISIEQKSTSHNPRSTVGTITEIYDYLRLLFARVGEPRCPDHNVPLTAQTISQMVDKVLSLPEDSKMMLLAPVVKNRKGEHVKILENIAAQGYIRARIDGEICDLSDPPKLALQKKHTIEVVVDRFKVRSDLATRLAESFETALELSGGTAIVAEMDNPKAEELVFSANFACPHCGYSVPELEPRLFSFNNPAGACPTCDGLGVQQYFDEDRVVQNPTISLAGGAVKGWDRRNFYYYQMLTSLAKHYHFDVEAPYESLPKKIQHIIMHGSGKEEIEFQYMNDRGDVVIRKHPFEGILNNMARRYKETESMSVREELAKNISNRPCIDCGGSRLRPEARNVYIGRTNLPIIAEKSIGETLEFFTALSLTGQKAQIAEKILKEIRERLQFLVNVGLNYLSLSRSAETLSGGEAQRIRLASQIGAGLVGVMYVLDEPSIGLHQRDNERLLNTLIHLRNLGNTVIVVEHDEDAIRAADHIIDIGPGAGVHGGQVIAQGNADEIMLNPNSITGKFLSGADKIEIPKKRTALDKKKWLKLKGASGNNLKNVNLDIPVGLFTCVTGVSGSGKSTLINDTLFPLAQNALNRAEKTDYAPYQSIEGLEHFDKVIDINQSPIGRTPRSNPATYTGLFTPIRELFAGVPEARARGYNPGRFSFNVRGGRCEACQGDGVLKVEMHFLPDVYVPCDQCKGKRYNRETLEIRYKGKTIHQVLDMTVEEAREFFDAIPMIARKLQTLMDVGLSYIRLGQSSTTLSGGEAQRVKLATELSKRDTGKTLYILDEPTTGLHFADIKQLLEVLHRLRDQGNTIVVIEHNLDVIKTADWIVDLGPEGGSGGGQIIATGTPEQVAKVTSSHTARFLKPILEKP.

Position 31-38 (31-38) interacts with ATP; sequence GLSGSGKS. The C4-type zinc-finger motif lies at 253 to 280; sequence CPHCGYSVPELEPRLFSFNNPAGACPTC. ABC transporter domains lie at 310–587 and 607–937; these read WDRR…PNSI and LDKK…RFLK. 640 to 647 is a binding site for ATP; that stretch reads GVSGSGKS. The C4-type zinc finger occupies 740 to 766; that stretch reads CEACQGDGVLKVEMHFLPDVYVPCDQC.

Belongs to the ABC transporter superfamily. UvrA family. In terms of assembly, forms a heterotetramer with UvrB during the search for lesions.

The protein resides in the cytoplasm. The UvrABC repair system catalyzes the recognition and processing of DNA lesions. UvrA is an ATPase and a DNA-binding protein. A damage recognition complex composed of 2 UvrA and 2 UvrB subunits scans DNA for abnormalities. When the presence of a lesion has been verified by UvrB, the UvrA molecules dissociate. In Haemophilus influenzae (strain ATCC 51907 / DSM 11121 / KW20 / Rd), this protein is UvrABC system protein A.